The sequence spans 244 residues: DNA repair protein RecO (244 aa).

It belongs to the RecO family.

Functionally, involved in DNA repair and RecF pathway recombination. This Ehrlichia chaffeensis (strain ATCC CRL-10679 / Arkansas) protein is DNA repair protein RecO.